The following is a 195-amino-acid chain: Cytochrome c biogenesis ATP-binding export protein CcmA (195 aa).

The ABC transporter domain occupies 1–195 (MLSLHQLQFN…IKSAQILQLV (195 aa)). Position 33 to 40 (33 to 40 (GANGSGKS)) interacts with ATP.

The protein belongs to the ABC transporter superfamily. CcmA exporter (TC 3.A.1.107) family. In terms of assembly, the complex is composed of two ATP-binding proteins (CcmA) and two transmembrane proteins (CcmB).

The protein localises to the cell inner membrane. The catalysed reaction is heme b(in) + ATP + H2O = heme b(out) + ADP + phosphate + H(+). Part of the ABC transporter complex CcmAB involved in the biogenesis of c-type cytochromes; once thought to export heme, this seems not to be the case, but its exact role is uncertain. Responsible for energy coupling to the transport system. This is Cytochrome c biogenesis ATP-binding export protein CcmA from Rickettsia felis (strain ATCC VR-1525 / URRWXCal2) (Rickettsia azadi).